The sequence spans 710 residues: Polyribonucleotide nucleotidyltransferase (710 aa).

2 residues coordinate Mg(2+): Asp-489 and Asp-495. The region spanning Pro-556–Ile-615 is the KH domain. Positions Gly-625–Lys-693 constitute an S1 motif domain. A disordered region spans residues Ser-691–Asp-710. Basic and acidic residues predominate over residues Pro-700–Asp-710.

Mg(2+) is required as a cofactor.

It localises to the cytoplasm. It catalyses the reaction RNA(n+1) + phosphate = RNA(n) + a ribonucleoside 5'-diphosphate. Involved in mRNA degradation. Catalyzes the phosphorolysis of single-stranded polyribonucleotides processively in the 3'- to 5'-direction. This Streptococcus pyogenes serotype M6 (strain ATCC BAA-946 / MGAS10394) protein is Polyribonucleotide nucleotidyltransferase.